A 341-amino-acid chain; its full sequence is General L-amino acid-binding periplasmic protein AapJ (341 aa).

A signal peptide spans 1-23 (MKNKLLSAAIGAAVLAVGASAAS).

Belongs to the bacterial solute-binding protein 3 family. The complex is composed of two ATP-binding proteins (AapP), two transmembrane proteins (AapM and AapQ) and a solute-binding protein (AapJ).

The protein localises to the periplasm. Its function is as follows. Part of the ABC transporter complex AapJQMP involved in uptake of L-amino acids. Affects the efflux of these amino acids as well. Essential for the development of bacteroids, the differentiated legume-symbiotic forms of this bacterium, and for the effective N(2) fixation by them. The sequence is that of General L-amino acid-binding periplasmic protein AapJ (aapJ) from Rhizobium johnstonii (strain DSM 114642 / LMG 32736 / 3841) (Rhizobium leguminosarum bv. viciae).